Consider the following 272-residue polypeptide: Protein UL11 (272 aa).

The first 31 residues, 1–31 (MLFRYITFHREKVLYLTAACIFGVYISLHDA), serve as a signal peptide directing secretion. Topologically, residues 32–224 (CIPVVGKIGT…PLQPSPQHQH (193 aa)) are extracellular. 4 N-linked (GlcNAc...) asparagine; by host glycosylation sites follow: N42, N93, N100, and N142. The interval 142 to 200 (NGTFPTTTTKKPTTTTRTTTTTTQRTTTTRTTTTAKKTTISTTHHKHPSPKKSTTPNSH) is disordered. A compositionally biased stretch (low complexity) spans 147–183 (TTTTKKPTTTTRTTTTTTQRTTTTRTTTTAKKTTIST). A helical membrane pass occupies residues 225–245 (LATHALWVLAVVIVIIIIIIF). Topologically, residues 246-272 (YFRIPQKLWLLWQHDKHGIVLIPQTDL) are cytoplasmic.

This sequence belongs to the RL11 family. In terms of assembly, interacts with host PTPRC; this interaction affects T-cell signaling. In terms of processing, glycosylated.

The protein localises to the host cell membrane. It is found in the host endoplasmic reticulum. In terms of biological role, plays a role in the modulation of host immune response by modulating T-cell function. Interacts with host PTPRC/CD45 and thereby reduces host TCR signaling and T-cell proliferation. The polypeptide is Protein UL11 (UL11) (Human cytomegalovirus (strain Merlin) (HHV-5)).